The primary structure comprises 440 residues: uncharacterized protein (440 aa).

Helical transmembrane passes span 1 to 21 (MLLV…QLYR), 29 to 49 (TVFI…SAFE), 70 to 90 (LLQM…IARI), 101 to 121 (VGVL…GIAM), 179 to 199 (TSII…LSLG), 226 to 246 (FVIR…AATS), 258 to 278 (IVAS…LLFF), 343 to 363 (IYPA…PFSF), 366 to 386 (ILTL…VGGG), and 389 to 409 (FAAI…GLLI).

Belongs to the dicarboxylate/amino acid:cation symporter (DAACS) (TC 2.A.23) family.

It localises to the cell membrane. This is an uncharacterized protein from Haemophilus influenzae (strain ATCC 51907 / DSM 11121 / KW20 / Rd).